A 235-amino-acid polypeptide reads, in one-letter code: 2-C-methyl-D-erythritol 4-phosphate cytidylyltransferase (235 aa).

Belongs to the IspD/TarI cytidylyltransferase family. IspD subfamily. In terms of assembly, homodimer.

The enzyme catalyses 2-C-methyl-D-erythritol 4-phosphate + CTP + H(+) = 4-CDP-2-C-methyl-D-erythritol + diphosphate. The protein operates within isoprenoid biosynthesis; isopentenyl diphosphate biosynthesis via DXP pathway; isopentenyl diphosphate from 1-deoxy-D-xylulose 5-phosphate: step 2/6. Catalyzes the formation of 4-diphosphocytidyl-2-C-methyl-D-erythritol from CTP and 2-C-methyl-D-erythritol 4-phosphate (MEP). This chain is 2-C-methyl-D-erythritol 4-phosphate cytidylyltransferase, found in Serratia proteamaculans (strain 568).